We begin with the raw amino-acid sequence, 48 residues long: Acidic phospholipase A2 (48 aa).

Ca(2+) contacts are provided by Tyr-27, Gly-29, and Gly-31. Residues Cys-28 and Cys-44 are joined by a disulfide bond. His-47 is an active-site residue. Residue Asp-48 participates in Ca(2+) binding.

It belongs to the phospholipase A2 family. Group II subfamily. D49 sub-subfamily. In terms of assembly, monomer. Ca(2+) is required as a cofactor. As to expression, expressed by the venom gland.

The protein resides in the secreted. The enzyme catalyses a 1,2-diacyl-sn-glycero-3-phosphocholine + H2O = a 1-acyl-sn-glycero-3-phosphocholine + a fatty acid + H(+). Its activity is regulated as follows. Inhibited by EDTA. Inhibited by Ba(2+), Cu(+), Fe(2+) and Zn(2+) ions and, to a lesser extent, by Mn(2+) and Mg(2+) ions. Snake venom phospholipase A2 (PLA2) that shows myotoxicity and induces paw edema in mice. Exhibits indirect hemolytic activity. Inhibits platelet aggregation induced by ADP and collagen. PLA2 catalyzes the calcium-dependent hydrolysis of the 2-acyl groups in 3-sn-phosphoglycerides. In Bothrops pauloensis (Neuwied's lancehead), this protein is Acidic phospholipase A2.